An 84-amino-acid polypeptide reads, in one-letter code: Defensin-like protein 37 (84 aa).

The N-terminal stretch at methionine 1–serine 24 is a signal peptide. Disulfide bonds link cysteine 46/cysteine 67, cysteine 52/cysteine 79, and cysteine 56/cysteine 81.

This sequence belongs to the DEFL family.

The protein resides in the secreted. The protein is Defensin-like protein 37 (EDA21) of Arabidopsis thaliana (Mouse-ear cress).